Here is a 403-residue protein sequence, read N- to C-terminus: Argininosuccinate synthase (403 aa).

10 to 18 (AYSGGLDTS) provides a ligand contact to ATP. L-citrulline is bound at residue Y87. G117 is a binding site for ATP. L-aspartate-binding residues include T119, N123, and D124. N123 lines the L-citrulline pocket. 4 residues coordinate L-citrulline: R127, S175, E260, and Y272.

Belongs to the argininosuccinate synthase family. Type 1 subfamily. Homotetramer.

The protein resides in the cytoplasm. The catalysed reaction is L-citrulline + L-aspartate + ATP = 2-(N(omega)-L-arginino)succinate + AMP + diphosphate + H(+). The protein operates within amino-acid biosynthesis; L-arginine biosynthesis; L-arginine from L-ornithine and carbamoyl phosphate: step 2/3. In Bacillus subtilis (strain 168), this protein is Argininosuccinate synthase.